A 314-amino-acid chain; its full sequence is L-lactate dehydrogenase 2 (314 aa).

NAD(+) contacts are provided by residues V16, D37, K42, Y68, and 82–83 (GV). 2 residues coordinate substrate: Q85 and R91. Residues S104, 121 to 123 (ASN), and T146 each bind NAD(+). 123-126 (NPVD) contacts substrate. 151-154 (DTTR) serves as a coordination point for substrate. 2 residues coordinate beta-D-fructose 1,6-bisphosphate: R156 and H171. Residue H178 is the Proton acceptor of the active site. Residue Y223 is modified to Phosphotyrosine. T232 lines the substrate pocket.

It belongs to the LDH/MDH superfamily. LDH family. Homotetramer.

The protein resides in the cytoplasm. It carries out the reaction (S)-lactate + NAD(+) = pyruvate + NADH + H(+). The protein operates within fermentation; pyruvate fermentation to lactate; (S)-lactate from pyruvate: step 1/1. With respect to regulation, allosterically activated by fructose 1,6-bisphosphate (FBP). Functionally, catalyzes the conversion of lactate to pyruvate. The protein is L-lactate dehydrogenase 2 of Lactococcus lactis subsp. lactis (strain IL1403) (Streptococcus lactis).